Here is a 379-residue protein sequence, read N- to C-terminus: tRNA 2-selenouridine synthase (379 aa).

Positions 17 to 140 (FLSGAPLLDT…MRRFLIESLE (124 aa)) constitute a Rhodanese domain. The active-site S-selanylcysteine intermediate is Cys-100.

Belongs to the SelU family. As to quaternary structure, monomer.

The catalysed reaction is 5-methylaminomethyl-2-thiouridine(34) in tRNA + selenophosphate + (2E)-geranyl diphosphate + H2O + H(+) = 5-methylaminomethyl-2-selenouridine(34) in tRNA + (2E)-thiogeraniol + phosphate + diphosphate. It carries out the reaction 5-methylaminomethyl-2-thiouridine(34) in tRNA + (2E)-geranyl diphosphate = 5-methylaminomethyl-S-(2E)-geranyl-thiouridine(34) in tRNA + diphosphate. It catalyses the reaction 5-methylaminomethyl-S-(2E)-geranyl-thiouridine(34) in tRNA + selenophosphate + H(+) = 5-methylaminomethyl-2-(Se-phospho)selenouridine(34) in tRNA + (2E)-thiogeraniol. The enzyme catalyses 5-methylaminomethyl-2-(Se-phospho)selenouridine(34) in tRNA + H2O = 5-methylaminomethyl-2-selenouridine(34) in tRNA + phosphate. Involved in the post-transcriptional modification of the uridine at the wobble position (U34) of tRNA(Lys), tRNA(Glu) and tRNA(Gln). Catalyzes the conversion of 2-thiouridine (S2U-RNA) to 2-selenouridine (Se2U-RNA). Acts in a two-step process involving geranylation of 2-thiouridine (S2U) to S-geranyl-2-thiouridine (geS2U) and subsequent selenation of the latter derivative to 2-selenouridine (Se2U) in the tRNA chain. This chain is tRNA 2-selenouridine synthase, found in Hahella chejuensis (strain KCTC 2396).